Reading from the N-terminus, the 316-residue chain is EFTTLFLLFSVLLLSASAEQCGSQAGGALCASGLCCSKFGWCGNTNDYCGPGNCQSQCPGGSPGDLGGVISNSMFDQMLNHRNDNACQGKGNFYSYNAFISAAGSFPGFGTTGDITARKREIAAFFAQTSHETTGGWASAPDGPYAWGYCFLREQGSPGDYCTPSNQWPCAPGRKYFGRGPIQISHNYNYGPCGRAIGVDLLNNPDLVATDSIISFKSAIWFWMTPQSPKPSCHDVITGRWQPSGTDQAANRVPGFGVITNIINGGLECGHGSDSRVQDRIGFYRRYCGILGVSPGDNLDCGNQRSFGNGLLVDTV.

The first 18 residues, 1–18 (EFTTLFLLFSVLLLSASA), serve as a signal peptide directing secretion. The 42-residue stretch at 19-60 (EQCGSQAGGALCASGLCCSKFGWCGNTNDYCGPGNCQSQCPG) folds into the Chitin-binding type-1 domain. Intrachain disulfides connect C21/C36, C30/C42, C35/C49, C54/C58, C87/C150, C162/C170, and C269/C301. E132 acts as the Proton donor in catalysis. The propeptide at 310–316 (GLLVDTV) is removed in mature form, vacuolar targeting.

It belongs to the glycosyl hydrolase 19 family. Chitinase class I subfamily.

The protein localises to the vacuole. The catalysed reaction is Random endo-hydrolysis of N-acetyl-beta-D-glucosaminide (1-&gt;4)-beta-linkages in chitin and chitodextrins.. Its function is as follows. Defense against chitin-containing fungal pathogens. This Solanum tuberosum (Potato) protein is Endochitinase 2 (CHTB2).